A 483-amino-acid chain; its full sequence is Pre-glycoprotein polyprotein GP complex (483 aa).

A lipid anchor (N-myristoyl glycine; by host) is attached at G2. At 2–17 (GQLVSFIGEIPAIVHE) the chain is on the extracellular side. A helical transmembrane segment spans residues 18 to 32 (ALNVALIAVSIIAIM). Residue K33 is a topological domain, cytoplasmic. The chain crosses the membrane as a helical span at residues 34–53 (GLINIWKSGLFQLIMFLILA). Extracellular loops occupy residues 54 to 58 (GRSCS) and 59 to 422 (ISIG…SLVD). C57 is a Zn(2+) binding site. N73, N88, N130, and N179 each carry an N-linked (GlcNAc...) asparagine; by host glycan. Intrachain disulfides connect C85–C223, C186–C204, C269–C282, C291–C300, and C354–C375. A glycan (N-linked (GlcNAc...) asparagine; by host) is linked at N216. 4 N-linked (GlcNAc...) asparagine; by host glycosylation sites follow: N355, N363, N380, and N385. The helical transmembrane segment at 423–443 (LCFWSTLFYTASIFLHLLHIP) threads the bilayer. Topologically, residues 444-483 (THRHIIGEGCPKPHRLTSDSLCACGFFQLKGRPTRWARIP) are cytoplasmic. The Zn(2+) site is built by H445, H447, C453, H457, C465, and C467.

This sequence belongs to the arenaviridae GPC protein family. As to quaternary structure, homotetramer; disulfide-linked. In terms of assembly, homotetramer. GP2 homotetramers bind through ionic interactions with GP1 homotetramers to form the GP complex together with the stable signal peptide. The GP-C polyprotein interacts with the host protease MBTPS1/SKI-1 resulting in the polyprotein processing. Specific enzymatic cleavages in vivo yield mature proteins. GP-C polyprotein is cleaved in the endoplasmic reticulum by the host protease MBTPS1. Only cleaved glycoprotein is incorporated into virions. In terms of processing, the SSP remains stably associated with the GP complex following cleavage by signal peptidase and plays crucial roles in the trafficking of GP through the secretory pathway. Post-translationally, myristoylation is necessary for GP2-mediated fusion activity.

Its subcellular location is the virion membrane. The protein localises to the host endoplasmic reticulum membrane. The protein resides in the host Golgi apparatus membrane. It localises to the host cell membrane. Class I viral fusion protein that directs fusion of viral and host endosomal membranes, leading to delivery of the nucleocapsid into the cytoplasm. Membrane fusion is mediated by irreversible conformational changes induced upon acidification in the endosome. Its function is as follows. Stable signal peptide (SSP): cleaved and functions as a signal peptide. In addition, it is also retained as the third component of the GP complex. The SSP is required for efficient glycoprotein expression, post-translational maturation cleavage of GP1 and GP2, glycoprotein transport to the cell surface plasma membrane, formation of infectious virus particles, and acid pH-dependent glycoprotein-mediated cell fusion. Functionally, interacts with the host receptor. In Peromyscus californicus (California mouse), this protein is Pre-glycoprotein polyprotein GP complex.